Reading from the N-terminus, the 3848-residue chain is Intermembrane lipid transfer protein tipC (3848 aa).

The 109-residue stretch at 4–112 (HIAASVLTKY…KFQDEKQAKL (109 aa)) folds into the Chorein N-terminal domain. Disordered stretches follow at residues 243–268 (IKKE…DEIE), 450–481 (LKLQ…TGGG), 966–985 (QQLQ…SPPL), 1174–1219 (KNNQ…NNNS), 1326–1345 (ERKL…GVST), 1907–1926 (ENIN…TTTT), 2024–2047 (DDYN…NQLP), 2209–2290 (IKPA…NKNL), 2330–2353 (FNPK…SPLL), 2509–2541 (KQLN…NLLG), 3209–3228 (GITN…NNND), and 3310–3342 (INQQ…NTTQ). 2 stretches are compositionally biased toward low complexity: residues 251-260 (QQQQQQQQQG) and 452-477 (LQQQ…PSTS). A compositionally biased stretch (low complexity) spans 1175–1190 (NNQNNNQNNNQNNNQN). Positions 1191 to 1200 (INESSPTVFI) are enriched in polar residues. Pro residues predominate over residues 1202–1211 (SPPPPPPPPL). The segment covering 1333–1345 (TSPTTPSSSGVST) has biased composition (low complexity). Composition is skewed to low complexity over residues 2029-2044 (DNYN…NSNN), 2217-2289 (NNNN…NNKN), and 2335-2353 (SSSS…SPLL). Low complexity-rich tracts occupy residues 3212-3228 (NDPN…NNND) and 3311-3342 (NQQP…NTTQ).

This sequence belongs to the VPS13 family.

It localises to the membrane. Mediates the transfer of lipids between membranes at organelle contact sites. The sequence is that of Intermembrane lipid transfer protein tipC (tipC) from Dictyostelium discoideum (Social amoeba).